The chain runs to 524 residues: MGCSQSSNVKDFKTRRSKFTNGNNYGKSGNNKNSEDLAINPGMYVRKKEGKIGESYFKVRKLGSGAYGEVLLCREKHGHGEKAIKVIKKSQFDKMKYSITNKIECDDKIHEEIYNEISLLKSLDHPNIIKLFDVFEDKKYFYLVTEFYEGGELFEQIINRHKFDECDAANIMKQILSGICYLHKHNIVHRDIKPENILLENKHSLLNIKIVDFGLSSFFSKDNKLRDRLGTAYYIAPEVLRKKYNEKCDVWSCGVILYILLCGYPPFGGQNDQDIIKKVEKGKYYFDFNDWKNISEEAKELIKLMLTYDYNKRITAKEALNSKWIKKYANNINKSDQKTLCGALSNMRKFEGSQKLAQAAILFIGSKLTTLEERKELTDIFKKLDKNGDGQLDKKELIEGYNILRSFKNELGELKNVEEEVDNILKEVDFDKNGYIEYSEFISVCMDKQILFSEERLRDAFNLFDTDKSGKITKEELANLFGLTSISEQMWNEVLGEADKNKDNMIDFDEFVNMMHKICDNKSS.

Residues 1 to 34 (MGCSQSSNVKDFKTRRSKFTNGNNYGKSGNNKNS) are disordered. Gly2 is lipidated: N-myristoyl glycine. A lipid anchor (S-palmitoyl cysteine) is attached at Cys3. The short motif at 10–20 (KDFKTRRSKFT) is the Basic cluster involved in membrane binding element. Phosphoserine; by autocatalysis is present on residues Ser17, Ser28, and Ser34. A compositionally biased stretch (low complexity) spans 21-32 (NGNNYGKSGNNK). The Protein kinase domain maps to 56–325 (YFKVRKLGSG…AKEALNSKWI (270 aa)). Residues 62–70 (LGSGAYGEV) and Lys85 contribute to the ATP site. Ser64 is modified (phosphoserine; by PKG; by autocatalysis). Thr100 carries the phosphothreonine; by autocatalysis modification. Phosphoserine; by autocatalysis is present on Ser118. Asp191 acts as the Proton acceptor in catalysis. A Phosphoserine modification is found at Ser217. At Ser220 the chain carries Phosphoserine; by autocatalysis. Thr231 is modified (phosphothreonine; by PKG; by autocatalysis). Ser335 is subject to Phosphoserine; by autocatalysis. A J domain autoinhibitory motif motif is present at residues 346-353 (NMRKFEGS). Residues 346–364 (NMRKFEGSQKLAQAAILFI) are j domain. A J domain interacts with the EF-hand domains motif is present at residues 354–364 (QKLAQAAILFI). EF-hand domains follow at residues 372–407 (EERK…LRSF), 416–451 (NVEE…KQIL), 452–487 (FSEE…TSIS), and 488–521 (EQMW…ICDN). Ca(2+) is bound by residues Asp385, Asn387, Asp389, Gln391, Glu396, Asp429, Asp431, Asn433, Tyr435, Glu440, Asp465, Asp467, Ser469, Lys471, Glu476, Asp499, Asn501, Asp503, Met505, and Glu510.

It belongs to the protein kinase superfamily. Ser/Thr protein kinase family. CDPK subfamily. As to quaternary structure, monomer. Forms a high molecular weight (250 and 400 kDa) complex. Forms a complex composed of CDPK1, PKA regulatory subunit PKAr and 14-3-3I; the complex is formed in merozoites in response to low extracellular level of K(+) and may play a role in microneme secretion. Interacts (when phosphorylated) with 14-3-3I in a Ca(2+)-independent manner; the interaction does not regulate CDPK1 catalytic activity but is required for merozoite invasion of host erythrocytes. Interacts with PKA regulatory subunit PKAr; in a Ca(2+)-dependent manner. Interacts with SERA5 p50 in the late schizont stage. Interacts with inner membrane complex protein IMC1g in late schizonts. Interacts with rhoptry protein RhopH3 in merozoites. The cofactor is Mg(2+). In terms of processing, myristoylated. Myristoylation, palmitoylation and the basic cluster motif are required for the localization to the parasitophorous vacuole membrane. Post-translationally, palmitoylated. Palmitoylation increases in merozoites in response to low level of extracellular K(+) in the host blood. Myristoylation, palmitoylation and the basic cluster motif are required for the localization to the parasitophorous vacuole membrane. Phosphorylation at Ser-64 occurs at late schizont stage and regulates CDPK1 protein-protein interaction. Phosphorylated at Ser-28, Ser-34 and Ser-64 in merozoites in response to low extracellular level of K(+). Phosphorylation at Thr-231 may regulate CDPK1 kinase activity. Phosphorylation increases in response to an increase in intracellular Ca(2+) levels. Autophosphorylated in vitro. Autophosphorylation does not affect membrane localization in vitro.

It localises to the membrane. Its subcellular location is the cell membrane. The protein localises to the parasitophorous vacuole membrane. It is found in the cytoplasm. The protein resides in the cell projection. It localises to the cilium. Its subcellular location is the flagellum. The protein localises to the host cell membrane. The enzyme catalyses L-seryl-[protein] + ATP = O-phospho-L-seryl-[protein] + ADP + H(+). The catalysed reaction is L-threonyl-[protein] + ATP = O-phospho-L-threonyl-[protein] + ADP + H(+). Activated by calcium. Upon calcium binding to the EF-hand domains, the C-terminus of the junction domain (J domain) undergoes a conformational change which results in the dissociation of the pseudo-substrate inhibitory motif from the catalytic domain. This, in turn may facilitate the autophosphorylation of the activation loop at Thr-231, which leads to the kinase activation. May be negatively regulated by PKA-mediated phosphorylation. Inhibited by purfalcamine. Calcium-dependent protein kinase which acts as a sensor and effector of intracellular Ca(2+) levels probably in part downstream of cGMP-activated PKG kinase. By phosphorylating various proteins, required for microneme secretion and thus merozoite egress from and invasion of host erythrocytes. During gametogenesis, essential for the development of both male and female gametes. Phosphorylates SERA5 p50 which enhances SERA5 p50 protease activity; however, SERA5 p50 protease activity has been shown in other studies to be controversial. Probably by phosphorylating SERA5 p50, plays a role in merozoite egress from host erythrocytes. Probably prior or during merozoite invasion of host erythrocytes, phosphorylates rhoptry protein RhopH3 which is required for RhopH3 localization to rhoptries and for its secretion. Probably in late schizonts, phosphorylates myosin A tail domain-interacting protein MTIP and glideosome-associated protein 45 GAP45, both of which are components of the motor complex that generates the force required by the parasite to invade host cells. In late schizonts, phosphorylates inner membrane complex protein IMC1g. In late schizonts, phosphorylates PKA regulatory subunit PKAr in a calcium-dependent manner, which may contribute to the dissociation of regulatory PKAr and catalytic PKAc subunits and promote the activation of PKAc. May phosphorylate raf kinase inhibitory protein RKIP which in turn may regulate CDPK1 catalytic activity. May phosphorylate proteins of the host erythrocyte membranes. This chain is Calcium-dependent protein kinase 1, found in Plasmodium falciparum (isolate 3D7).